The chain runs to 371 residues: 3-dehydroquinate synthase (371 aa).

NAD(+)-binding positions include 70–75, 104–108, 128–129, lysine 141, and lysine 150; these read DAEDGK, GAVTD, and TT. 3 residues coordinate Zn(2+): glutamate 183, histidine 246, and histidine 262.

The protein belongs to the sugar phosphate cyclases superfamily. Dehydroquinate synthase family. Requires Co(2+) as cofactor. It depends on Zn(2+) as a cofactor. NAD(+) serves as cofactor.

The protein localises to the cytoplasm. It catalyses the reaction 7-phospho-2-dehydro-3-deoxy-D-arabino-heptonate = 3-dehydroquinate + phosphate. It functions in the pathway metabolic intermediate biosynthesis; chorismate biosynthesis; chorismate from D-erythrose 4-phosphate and phosphoenolpyruvate: step 2/7. In terms of biological role, catalyzes the conversion of 3-deoxy-D-arabino-heptulosonate 7-phosphate (DAHP) to dehydroquinate (DHQ). This chain is 3-dehydroquinate synthase, found in Saccharopolyspora erythraea (strain ATCC 11635 / DSM 40517 / JCM 4748 / NBRC 13426 / NCIMB 8594 / NRRL 2338).